The chain runs to 437 residues: Phosphomethylpyrimidine synthase (437 aa).

Substrate-binding positions include Asn69, Met98, Tyr127, His163, 185 to 187 (SRG), 226 to 229 (DALR), and Glu265. Position 269 (His269) interacts with Zn(2+). Substrate is bound at residue Tyr292. His333 contacts Zn(2+). Residues Cys409, Cys412, and Cys416 each coordinate [4Fe-4S] cluster.

Belongs to the ThiC family. [4Fe-4S] cluster is required as a cofactor.

The catalysed reaction is 5-amino-1-(5-phospho-beta-D-ribosyl)imidazole + S-adenosyl-L-methionine = 4-amino-2-methyl-5-(phosphooxymethyl)pyrimidine + CO + 5'-deoxyadenosine + formate + L-methionine + 3 H(+). It participates in cofactor biosynthesis; thiamine diphosphate biosynthesis. In terms of biological role, catalyzes the synthesis of the hydroxymethylpyrimidine phosphate (HMP-P) moiety of thiamine from aminoimidazole ribotide (AIR) in a radical S-adenosyl-L-methionine (SAM)-dependent reaction. In Alkaliphilus oremlandii (strain OhILAs) (Clostridium oremlandii (strain OhILAs)), this protein is Phosphomethylpyrimidine synthase.